Consider the following 95-residue polypeptide: Large ribosomal subunit protein bL21 (95 aa).

The protein belongs to the bacterial ribosomal protein bL21 family. As to quaternary structure, part of the 50S ribosomal subunit. Contacts protein L20.

Its function is as follows. This protein binds to 23S rRNA in the presence of protein L20. This Rubrobacter xylanophilus (strain DSM 9941 / JCM 11954 / NBRC 16129 / PRD-1) protein is Large ribosomal subunit protein bL21.